We begin with the raw amino-acid sequence, 347 residues long: Spermidine/putrescine import ATP-binding protein PotA (347 aa).

Residues 6–236 (IEIKNVYKEF…PKNAFVAKFI (231 aa)) enclose the ABC transporter domain. 38-45 (GPSGCGKT) serves as a coordination point for ATP.

Belongs to the ABC transporter superfamily. Spermidine/putrescine importer (TC 3.A.1.11.1) family. In terms of assembly, the complex is composed of two ATP-binding proteins (PotA), two transmembrane proteins (PotB and PotC) and a solute-binding protein (PotD).

The protein resides in the cell membrane. The enzyme catalyses ATP + H2O + polyamine-[polyamine-binding protein]Side 1 = ADP + phosphate + polyamineSide 2 + [polyamine-binding protein]Side 1.. Part of the ABC transporter complex PotABCD involved in spermidine/putrescine import. Responsible for energy coupling to the transport system. In Clostridium novyi (strain NT), this protein is Spermidine/putrescine import ATP-binding protein PotA.